Consider the following 297-residue polypeptide: GTP-binding protein REM 1 (297 aa).

Over residues 1 to 10 (MTLNTQQEAK) the composition is skewed to polar residues. A disordered region spans residues 1 to 73 (MTLNTQQEAK…DGWSSESSDS (73 aa)). Position 51 is a phosphoserine (S51). Positions 64 to 73 (DGWSSESSDS) are enriched in low complexity. GTP contacts are provided by residues 87–94 (GDPGVGKT) and 194–197 (NKAD). Positions 267 to 286 (ARRFLARLTARSARRRALKA) are calmodulin-binding.

This sequence belongs to the small GTPase superfamily. RGK family. In vitro, interacts with calmodulin in a calcium-dependent manner. Interacts 14-3-3 family members including YWHAE, YWHAH, YWHAQ, YWHAZ in a phosphorylation-dependent manner. As to expression, high expression in cardiac muscle. Moderate expression in lung, skeletal muscle and kidney. Low levels in spleen and brain.

In terms of biological role, promotes endothelial cell sprouting and actin cytoskeletal reorganization. May be involved in angiogenesis. May function in Ca(2+) signaling. This is GTP-binding protein REM 1 (Rem1) from Mus musculus (Mouse).